The chain runs to 379 residues: Chaperone protein DnaJ (379 aa).

In terms of domain architecture, J spans 5–70; sequence DYYEVLGVSR…QKRAAYDQYG (66 aa). The CR-type zinc finger occupies 134 to 212; the sequence is GVTKEIRIPT…CHGHGRVEKS (79 aa). The Zn(2+) site is built by C147, C150, C164, C167, C186, C189, C200, and C203. 4 CXXCXGXG motif repeats span residues 147-154, 164-171, 186-193, and 200-207; these read CDVCHGSG, CPTCHGAG, CPHCHGRG, and CNKCHGHG.

Belongs to the DnaJ family. As to quaternary structure, homodimer. The cofactor is Zn(2+).

It localises to the cytoplasm. Participates actively in the response to hyperosmotic and heat shock by preventing the aggregation of stress-denatured proteins and by disaggregating proteins, also in an autonomous, DnaK-independent fashion. Unfolded proteins bind initially to DnaJ; upon interaction with the DnaJ-bound protein, DnaK hydrolyzes its bound ATP, resulting in the formation of a stable complex. GrpE releases ADP from DnaK; ATP binding to DnaK triggers the release of the substrate protein, thus completing the reaction cycle. Several rounds of ATP-dependent interactions between DnaJ, DnaK and GrpE are required for fully efficient folding. Also involved, together with DnaK and GrpE, in the DNA replication of plasmids through activation of initiation proteins. This is Chaperone protein DnaJ from Yersinia pseudotuberculosis serotype O:1b (strain IP 31758).